The chain runs to 298 residues: ADP/ATP translocase 2 (298 aa).

Position 1 is an N-acetylmethionine (Met-1). The Mitochondrial intermembrane portion of the chain corresponds to 1–7; the sequence is MTDAAVS. Position 2 is an N-acetylthreonine; in ADP/ATP translocase 2, N-terminally processed (Thr-2). The stretch at 6-98 is one Solcar 1 repeat; the sequence is VSFAKDFLAG…FAFKDKYKQI (93 aa). At Ser-7 the chain carries Phosphoserine. The chain crosses the membrane as a helical span at residues 8 to 37; sequence FAKDFLAGGVAAAISKTAVAPIERVKLLLQ. At Lys-23 the chain carries N6-malonyllysine. Residues 38–74 lie on the Mitochondrial matrix side of the membrane; the sequence is VQHASKQITADKQYKGIIDCVVRIPKEQGVLSFWRGN. At Lys-43 the chain carries N6-succinyllysine. Lys-52 is modified (N6,N6,N6-trimethyllysine; alternate). Lys-52 carries the N6,N6-dimethyllysine; alternate modification. Lys-52 is subject to N6-methyllysine; alternate. A helical transmembrane segment spans residues 75–99; that stretch reads LANVIRYFPTQALNFAFKDKYKQIF. ADP-binding residues include Arg-80 and Lys-92. An N6-malonyllysine mark is found at Lys-92 and Lys-96. The Mitochondrial intermembrane portion of the chain corresponds to 100–109; it reads LGGVDKRTQF. The residue at position 105 (Lys-105) is an N6-acetyllysine; alternate. Lys-105 is modified (N6-succinyllysine; alternate). Residues 110 to 130 traverse the membrane as a helical segment; sequence WRYFAGNLASGGAAGATSLCF. Solcar repeat units follow at residues 111 to 201 and 212 to 297; these read RYFA…AKGM and ISWM…IKKF. At 131 to 178 the chain is on the mitochondrial matrix side; sequence VYPLDFARTRLAADVGKAGAEREFRGLGDCLVKIYKSDGIRGLYQGFN. N6-methyllysine; alternate is present on Lys-147. Lys-147 is subject to N6-acetyllysine; alternate. The residue at position 147 (Lys-147) is an N6-succinyllysine; alternate. Residue Lys-147 is modified to N6-malonyllysine; alternate. An N6-acetyllysine mark is found at Lys-163 and Lys-166. Residues 179–199 traverse the membrane as a helical segment; sequence VSVQGIIIYRAAYFGIYDTAK. Residues 200 to 210 lie on the Mitochondrial intermembrane side of the membrane; that stretch reads GMLPDPKNTHI. A helical membrane pass occupies residues 211 to 231; it reads FISWMIAQSVTAVAGLTSYPF. Residues 232 to 273 lie on the Mitochondrial matrix side of the membrane; it reads DTVRRRMMMQSGRKGTDIMYTGTLDCWRKIARDEGAKAFFKG. Arg-235 is an ADP binding site. The tract at residues 235–240 is important for transport activity; that stretch reads RRRMMM. The short motif at 235 to 240 is the Nucleotide carrier signature motif element; that stretch reads RRRMMM. Position 268 is an N6-acetyllysine; alternate (Lys-268). Lys-268 is modified (N6-succinyllysine; alternate). The chain crosses the membrane as a helical span at residues 274 to 291; it reads AWSNVLRGMGGAFVLVLY. Residues 292 to 298 lie on the Mitochondrial intermembrane side of the membrane; it reads DEIKKFT.

It belongs to the mitochondrial carrier (TC 2.A.29) family. In terms of assembly, monomer. Component of the MMXD complex, which includes CIAO1, ERCC2, CIAO2B, MMS19 and SLC25A5/ANT2. Interacts with AK4. Interacts with TIMM44; leading to inhibit the presequence translocase TIMM23, thereby promoting stabilization of PINK1. Trimethylated by ANTKMT at Lys-52.

The protein localises to the mitochondrion inner membrane. It localises to the membrane. It carries out the reaction ADP(in) + ATP(out) = ADP(out) + ATP(in). The catalysed reaction is H(+)(in) = H(+)(out). Its activity is regulated as follows. The matrix-open state (m-state) is inhibited by the membrane-permeable bongkrekic acid (BKA). The cytoplasmic-open state (c-state) is inhibited by the membrane-impermeable toxic inhibitor carboxyatractyloside (CATR). Proton transporter activity is inhibited by ADP:ATP antiporter activity. ADP:ATP antiporter that mediates import of ADP into the mitochondrial matrix for ATP synthesis, and export of ATP out to fuel the cell. Cycles between the cytoplasmic-open state (c-state) and the matrix-open state (m-state): operates by the alternating access mechanism with a single substrate-binding site intermittently exposed to either the cytosolic (c-state) or matrix (m-state) side of the inner mitochondrial membrane. In addition to its ADP:ATP antiporter activity, also involved in mitochondrial uncoupling and mitochondrial permeability transition pore (mPTP) activity. Plays a role in mitochondrial uncoupling by acting as a proton transporter: proton transport uncouples the proton flows via the electron transport chain and ATP synthase to reduce the efficiency of ATP production and cause mitochondrial thermogenesis. Proton transporter activity is inhibited by ADP:ATP antiporter activity, suggesting that SLC25A5/ANT2 acts as a master regulator of mitochondrial energy output by maintaining a delicate balance between ATP production (ADP:ATP antiporter activity) and thermogenesis (proton transporter activity). Proton transporter activity requires free fatty acids as cofactor, but does not transport it. Probably mediates mitochondrial uncoupling in tissues that do not express UCP1. Also plays a key role in mPTP opening, a non-specific pore that enables free passage of the mitochondrial membranes to solutes of up to 1.5 kDa, and which contributes to cell death. It is however unclear if SLC25A5/ANT2 constitutes a pore-forming component of mPTP or regulates it. Acts as a regulator of mitophagy independently of ADP:ATP antiporter activity: promotes mitophagy via interaction with TIMM44, leading to inhibit the presequence translocase TIMM23, thereby promoting stabilization of PINK1. As part of the mitotic spindle-associated MMXD complex it may play a role in chromosome segregation. The protein is ADP/ATP translocase 2 of Bos taurus (Bovine).